Here is a 350-residue protein sequence, read N- to C-terminus: tRNA uridine(34) hydroxylase (350 aa).

A Rhodanese domain is found at 146–240 (DDPDAVFIDM…YARRAREQGL (95 aa)). The active-site Cysteine persulfide intermediate is the C200. Over residues 319–328 (RRRRAGRENG) the composition is skewed to basic and acidic residues. The segment at 319-350 (RRRRAGRENGNKIFNKSRGRLNSKLSIPDPAE) is disordered.

This sequence belongs to the TrhO family.

The enzyme catalyses uridine(34) in tRNA + AH2 + O2 = 5-hydroxyuridine(34) in tRNA + A + H2O. In terms of biological role, catalyzes oxygen-dependent 5-hydroxyuridine (ho5U) modification at position 34 in tRNAs. This is tRNA uridine(34) hydroxylase from Salmonella schwarzengrund (strain CVM19633).